The following is a 152-amino-acid chain: MSGAIRIDAQQLPHAEGLPLPAYHSSQAAGLDLMAAVPEQTPLVLAAGQYAMVPTGLIIALPDGFEAQVRPRSGLAAKHGVTVLNSPGTVDADYRGEINVLLVNLGNAPFTIRRGERIAQMIVAPVTRVELARAVSLSATSRGSGGFGSTGR.

Residues 72 to 74, Asn-85, and 89 to 91 contribute to the substrate site; these read RSG and TVD.

It belongs to the dUTPase family. It depends on Mg(2+) as a cofactor.

The enzyme catalyses dUTP + H2O = dUMP + diphosphate + H(+). It functions in the pathway pyrimidine metabolism; dUMP biosynthesis; dUMP from dCTP (dUTP route): step 2/2. Functionally, this enzyme is involved in nucleotide metabolism: it produces dUMP, the immediate precursor of thymidine nucleotides and it decreases the intracellular concentration of dUTP so that uracil cannot be incorporated into DNA. This chain is Deoxyuridine 5'-triphosphate nucleotidohydrolase, found in Nitrobacter hamburgensis (strain DSM 10229 / NCIMB 13809 / X14).